Consider the following 53-residue polypeptide: ATP synthase protein 8 (53 aa).

Residues 9–29 (WIFFLFFFICIFLIFNIMNYF) form a helical membrane-spanning segment.

This sequence belongs to the ATPase protein 8 family. F-type ATPases have 2 components, CF(1) - the catalytic core - and CF(0) - the membrane proton channel.

It is found in the mitochondrion membrane. Functionally, mitochondrial membrane ATP synthase (F(1)F(0) ATP synthase or Complex V) produces ATP from ADP in the presence of a proton gradient across the membrane which is generated by electron transport complexes of the respiratory chain. F-type ATPases consist of two structural domains, F(1) - containing the extramembraneous catalytic core and F(0) - containing the membrane proton channel, linked together by a central stalk and a peripheral stalk. During catalysis, ATP synthesis in the catalytic domain of F(1) is coupled via a rotary mechanism of the central stalk subunits to proton translocation. Part of the complex F(0) domain. Minor subunit located with subunit a in the membrane. The polypeptide is ATP synthase protein 8 (mt:ATPase8) (Bombyx mori (Silk moth)).